We begin with the raw amino-acid sequence, 158 residues long: 2-C-methyl-D-erythritol 2,4-cyclodiphosphate synthase (158 aa).

Residues D8 and H10 each contribute to the a divalent metal cation site. 4-CDP-2-C-methyl-D-erythritol 2-phosphate is bound by residues 8–10 (DVH) and 34–35 (HS). H42 is an a divalent metal cation binding site. 4-CDP-2-C-methyl-D-erythritol 2-phosphate contacts are provided by residues 56–58 (DIG), 132–135 (TTNE), and R142.

Belongs to the IspF family. Homotrimer. A divalent metal cation is required as a cofactor.

The enzyme catalyses 4-CDP-2-C-methyl-D-erythritol 2-phosphate = 2-C-methyl-D-erythritol 2,4-cyclic diphosphate + CMP. The protein operates within isoprenoid biosynthesis; isopentenyl diphosphate biosynthesis via DXP pathway; isopentenyl diphosphate from 1-deoxy-D-xylulose 5-phosphate: step 4/6. Its function is as follows. Involved in the biosynthesis of isopentenyl diphosphate (IPP) and dimethylallyl diphosphate (DMAPP), two major building blocks of isoprenoid compounds. Catalyzes the conversion of 4-diphosphocytidyl-2-C-methyl-D-erythritol 2-phosphate (CDP-ME2P) to 2-C-methyl-D-erythritol 2,4-cyclodiphosphate (ME-CPP) with a corresponding release of cytidine 5-monophosphate (CMP). The polypeptide is 2-C-methyl-D-erythritol 2,4-cyclodiphosphate synthase (Chlorobium phaeobacteroides (strain DSM 266 / SMG 266 / 2430)).